A 161-amino-acid polypeptide reads, in one-letter code: Phosphopantetheine adenylyltransferase (161 aa).

Position 10 (T10) interacts with substrate. ATP is bound by residues 10 to 11 and H18; that span reads TF. Substrate is bound by residues K42, L74, and R88. Residues 89-91, E99, and 124-130 contribute to the ATP site; these read GIR and WRYLSST.

This sequence belongs to the bacterial CoaD family. Homohexamer. Mg(2+) is required as a cofactor.

The protein localises to the cytoplasm. It carries out the reaction (R)-4'-phosphopantetheine + ATP + H(+) = 3'-dephospho-CoA + diphosphate. The protein operates within cofactor biosynthesis; coenzyme A biosynthesis; CoA from (R)-pantothenate: step 4/5. Functionally, reversibly transfers an adenylyl group from ATP to 4'-phosphopantetheine, yielding dephospho-CoA (dPCoA) and pyrophosphate. The chain is Phosphopantetheine adenylyltransferase from Haemophilus ducreyi (strain 35000HP / ATCC 700724).